A 440-amino-acid chain; its full sequence is Chromosome partition protein MukF (440 aa).

Residues 208-236 (LSETSGTLRELQDTLEAAGDKLQANLLRI) form a leucine-zipper region.

Belongs to the MukF family. Interacts, and probably forms a ternary complex, with MukE and MukB via its C-terminal region. The complex formation is stimulated by calcium or magnesium. It is required for an interaction between MukE and MukB.

The protein localises to the cytoplasm. It localises to the nucleoid. Its function is as follows. Involved in chromosome condensation, segregation and cell cycle progression. May participate in facilitating chromosome segregation by condensation DNA from both sides of a centrally located replisome during cell division. Not required for mini-F plasmid partitioning. Probably acts via its interaction with MukB and MukE. Overexpression results in anucleate cells. It has a calcium binding activity. This chain is Chromosome partition protein MukF, found in Shigella boydii serotype 4 (strain Sb227).